The primary structure comprises 443 residues: ATP-dependent protease ATPase subunit HslU (443 aa).

Residues I18, 60-65, D256, E321, and R393 contribute to the ATP site; that span reads GVGKTE.

Belongs to the ClpX chaperone family. HslU subfamily. As to quaternary structure, a double ring-shaped homohexamer of HslV is capped on each side by a ring-shaped HslU homohexamer. The assembly of the HslU/HslV complex is dependent on binding of ATP.

Its subcellular location is the cytoplasm. Functionally, ATPase subunit of a proteasome-like degradation complex; this subunit has chaperone activity. The binding of ATP and its subsequent hydrolysis by HslU are essential for unfolding of protein substrates subsequently hydrolyzed by HslV. HslU recognizes the N-terminal part of its protein substrates and unfolds these before they are guided to HslV for hydrolysis. The polypeptide is ATP-dependent protease ATPase subunit HslU (Histophilus somni (strain 2336) (Haemophilus somnus)).